The primary structure comprises 141 residues: Nucleoside diphosphate kinase (141 aa).

ATP-binding residues include Lys11, Phe59, Arg87, Thr93, Arg104, and Asn114. The Pros-phosphohistidine intermediate role is filled by His117.

Belongs to the NDK family. As to quaternary structure, homotetramer. Mg(2+) is required as a cofactor.

The protein localises to the cytoplasm. It catalyses the reaction a 2'-deoxyribonucleoside 5'-diphosphate + ATP = a 2'-deoxyribonucleoside 5'-triphosphate + ADP. The enzyme catalyses a ribonucleoside 5'-diphosphate + ATP = a ribonucleoside 5'-triphosphate + ADP. Functionally, major role in the synthesis of nucleoside triphosphates other than ATP. The ATP gamma phosphate is transferred to the NDP beta phosphate via a ping-pong mechanism, using a phosphorylated active-site intermediate. This is Nucleoside diphosphate kinase from Nitrosomonas europaea (strain ATCC 19718 / CIP 103999 / KCTC 2705 / NBRC 14298).